Consider the following 352-residue polypeptide: Ion-translocating oxidoreductase complex subunit D (352 aa).

The next 4 helical transmembrane spans lie at Ile-20–Gly-40, Gly-42–Leu-62, Val-69–Pro-91, and Pro-123–Leu-143. Thr-187 is modified (FMN phosphoryl threonine). Transmembrane regions (helical) follow at residues Leu-215–Leu-235, Trp-242–Phe-262, Leu-267–Leu-287, Leu-301–Pro-321, and Asp-322–Thr-342.

Belongs to the NqrB/RnfD family. The complex is composed of six subunits: RsxA, RsxB, RsxC, RsxD, RsxE and RsxG. FMN serves as cofactor.

Its subcellular location is the cell inner membrane. Functionally, part of a membrane-bound complex that couples electron transfer with translocation of ions across the membrane. Required to maintain the reduced state of SoxR. This is Ion-translocating oxidoreductase complex subunit D from Salmonella paratyphi A (strain ATCC 9150 / SARB42).